We begin with the raw amino-acid sequence, 504 residues long: Probable cytochrome P450 305a1 (504 aa).

A heme-binding site is contributed by Cys450.

Belongs to the cytochrome P450 family. The cofactor is heme.

Its subcellular location is the endoplasmic reticulum membrane. The protein resides in the microsome membrane. In terms of biological role, may be involved in the metabolism of insect hormones and in the breakdown of synthetic insecticides. The polypeptide is Probable cytochrome P450 305a1 (Cyp305a1) (Drosophila melanogaster (Fruit fly)).